We begin with the raw amino-acid sequence, 201 residues long: UPF0056 membrane protein PH0760 (201 aa).

The next 6 membrane-spanning stretches (helical) occupy residues 8–28 (FMILYTGMFAITNPIGAVPVF), 49–69 (ITVFITLTVFALVGQWIFKFF), 73–93 (IDAFAIAGGILLFRMGMEMLS), 111–131 (VAVIPLAIPLISGPGAITTVM), 140–160 (GIVILTIIAIGLTTYGILYSG), and 181–201 (LILTSMAMQMIINGIKGAFGI).

It belongs to the UPF0056 (MarC) family.

The protein resides in the cell membrane. The polypeptide is UPF0056 membrane protein PH0760 (Pyrococcus horikoshii (strain ATCC 700860 / DSM 12428 / JCM 9974 / NBRC 100139 / OT-3)).